The primary structure comprises 579 residues: DBIRD complex subunit ZNF326 (579 aa).

The segment at 1-124 is mediates transcriptional activation; the sequence is MDFEDDYTHS…YRNSLDSFGG (124 aa). A phosphoserine mark is found at serine 48, serine 56, serine 63, serine 69, serine 81, serine 82, serine 91, serine 106, serine 114, serine 118, serine 121, and serine 137. Residue lysine 140 forms a Glycyl lysine isopeptide (Lys-Gly) (interchain with G-Cter in SUMO2) linkage. Residues 154-194 form a disordered region; it reads YSSYSSFSSPHMKPAPVGSRGRGTPAYPESTFGSRNYDAFG. An Omega-N-methylarginine modification is found at arginine 173. Position 212 is a phosphoserine (serine 212). At arginine 235 the chain carries Omega-N-methylarginine. The Bipartite nuclear localization signal motif lies at 238 to 260; that stretch reads KRKMIQPFNKPGGTFIKKPKLAK. A Glycyl lysine isopeptide (Lys-Gly) (interchain with G-Cter in SUMO2) cross-link involves residue lysine 240. N6-acetyllysine; alternate is present on lysine 247. A Glycyl lysine isopeptide (Lys-Gly) (interchain with G-Cter in SUMO2); alternate cross-link involves residue lysine 247. Residues 248–302 form a disordered region; that stretch reads PGGTFIKKPKLAKPVEKMSLSKSPTKTDPKNEEEEKRRIEARREKQRRRREKNSE. A Phosphothreonine modification is found at threonine 251. Glycyl lysine isopeptide (Lys-Gly) (interchain with G-Cter in SUMO2) cross-links involve residues lysine 254 and lysine 264. Serine 270 bears the Phosphoserine mark. Over residues 272–290 the composition is skewed to basic and acidic residues; it reads TKTDPKNEEEEKRRIEARR. The C2H2 AKAP95-type 1 zinc finger occupies 314 to 336; it reads CSFCKFRTFEEKDIELHLESASH. A Glycyl lysine isopeptide (Lys-Gly) (interchain with G-Cter in SUMO2) cross-link involves residue lysine 401. The segment at 407-430 adopts a C2H2 AKAP95-type 2 zinc-finger fold; it reads CSACSVYIPALHSSVQQHLKSPDH. Residues lysine 459 and lysine 467 each participate in a glycyl lysine isopeptide (Lys-Gly) (interchain with G-Cter in SUMO2) cross-link. The tract at residues 470-579 is disordered; that stretch reads NPFEIQDHSQ…GFSVDQAEEN (110 aa). Acidic residues-rich tracts occupy residues 483–520, 529–541, and 549–565; these read IEGD…EEVG, GDTE…EGEG, and GEGE…EEAK.

The protein belongs to the AKAP95 family. In terms of assembly, component of the DBIRD complex. Interacts with CCAR2; the interaction is direct.

It is found in the nucleus matrix. In terms of biological role, core component of the DBIRD complex, a multiprotein complex that acts at the interface between core mRNP particles and RNA polymerase II (RNAPII) and integrates transcript elongation with the regulation of alternative splicing: the DBIRD complex affects local transcript elongation rates and alternative splicing of a large set of exons embedded in (A + T)-rich DNA regions. May play a role in neuronal differentiation and is able to bind DNA and activate expression in vitro. The polypeptide is DBIRD complex subunit ZNF326 (ZNF326) (Bos taurus (Bovine)).